We begin with the raw amino-acid sequence, 832 residues long: Cation/H(+) antiporter 21 (832 aa).

The next 12 membrane-spanning stretches (helical) occupy residues 33 to 55 (ISAA…RILY), 61 to 81 (LCLP…PTVL), 99 to 119 (LLET…GLGL), 132 to 152 (VIIA…LYYL), 161 to 181 (ILAG…PDLA), 200 to 220 (CAAV…MAIF), 236 to 256 (STIA…AWIF), 278 to 298 (IICS…AFLF), 319 to 339 (FLSG…ADIG), 352 to 372 (VVTS…SIFL), 379 to 399 (GLAI…ILNA), and 413 to 433 (HLTL…AIAY). Residues 792–802 (RQTAENNNQEP) are compositionally biased toward polar residues. The disordered stretch occupies residues 792 to 832 (RQTAENNNQEPVQGKAKTDHEATPFMEDEDDEVEHQYSMRR).

This sequence belongs to the monovalent cation:proton antiporter 2 (CPA2) transporter (TC 2.A.37) family. CHX (TC 2.A.37.4) subfamily. Specifically expressed in root endodermal cells. Expressed in seedlings, roots, leaves, flowers, flower buds and pollen.

The protein resides in the cell membrane. Operates as a Na(+)/H(+) antiporter that plays a role in regulation of xylem Na(+) concentration and, consequently, Na(+) accumulation in the leaf. Required for pollen tube guidance, but not for normal pollen development. May also be involved in the development or function of the female gametophyte. This chain is Cation/H(+) antiporter 21 (CHX21), found in Arabidopsis thaliana (Mouse-ear cress).